The sequence spans 214 residues: NAD(P)H-quinone oxidoreductase subunit 6, chloroplastic (214 aa).

5 consecutive transmembrane segments (helical) span residues 10-30 (FSLF…VLLP), 32-52 (ILYS…IYLL), 61-81 (AQVL…IMLV), 102-122 (IIGL…VTTP), and 163-183 (LLPF…AIVI).

It belongs to the complex I subunit 6 family. As to quaternary structure, NDH is composed of at least 16 different subunits, 5 of which are encoded in the nucleus.

It is found in the plastid. Its subcellular location is the chloroplast thylakoid membrane. The enzyme catalyses a plastoquinone + NADH + (n+1) H(+)(in) = a plastoquinol + NAD(+) + n H(+)(out). It carries out the reaction a plastoquinone + NADPH + (n+1) H(+)(in) = a plastoquinol + NADP(+) + n H(+)(out). Its function is as follows. NDH shuttles electrons from NAD(P)H:plastoquinone, via FMN and iron-sulfur (Fe-S) centers, to quinones in the photosynthetic chain and possibly in a chloroplast respiratory chain. The immediate electron acceptor for the enzyme in this species is believed to be plastoquinone. Couples the redox reaction to proton translocation, and thus conserves the redox energy in a proton gradient. This chain is NAD(P)H-quinone oxidoreductase subunit 6, chloroplastic (ndhG), found in Chlorokybus atmophyticus (Soil alga).